A 108-amino-acid polypeptide reads, in one-letter code: Nucleoid-associated protein Bphy_0952 (108 aa).

Positions 87–108 (AQEKMGGMTSGLPLPPGFKLPF) are disordered. Pro residues predominate over residues 99-108 (PLPPGFKLPF).

Belongs to the YbaB/EbfC family. As to quaternary structure, homodimer.

The protein resides in the cytoplasm. It is found in the nucleoid. Functionally, binds to DNA and alters its conformation. May be involved in regulation of gene expression, nucleoid organization and DNA protection. The sequence is that of Nucleoid-associated protein Bphy_0952 from Paraburkholderia phymatum (strain DSM 17167 / CIP 108236 / LMG 21445 / STM815) (Burkholderia phymatum).